Consider the following 125-residue polypeptide: Protein 5 (125 aa).

This is Protein 5 (5) from Hordeum vulgare (Barley).